Reading from the N-terminus, the 190-residue chain is GTP cyclohydrolase 1 (190 aa).

Residues Cys-79, His-82, and Cys-151 each contribute to the Zn(2+) site.

Belongs to the GTP cyclohydrolase I family. As to quaternary structure, toroid-shaped homodecamer, composed of two pentamers of five dimers.

The catalysed reaction is GTP + H2O = 7,8-dihydroneopterin 3'-triphosphate + formate + H(+). Its pathway is cofactor biosynthesis; 7,8-dihydroneopterin triphosphate biosynthesis; 7,8-dihydroneopterin triphosphate from GTP: step 1/1. This is GTP cyclohydrolase 1 from Clostridioides difficile (strain 630) (Peptoclostridium difficile).